A 409-amino-acid polypeptide reads, in one-letter code: L-cysteine:1D-myo-inositol 2-amino-2-deoxy-alpha-D-glucopyranoside ligase (409 aa).

Cys43 contributes to the Zn(2+) binding site. L-cysteinyl-5'-AMP-binding positions include 43-46, Thr58, and 81-83; these read CGIT and NVT. Residues 45–55 carry the 'HIGH' region motif; that stretch reads ITPYDATHMGH. Residues 183–188 carry the 'ERGGDP' region motif; that stretch reads ERGGDP. Trp224 contacts L-cysteinyl-5'-AMP. Zn(2+) is bound at residue Cys228. 246–248 serves as a coordination point for L-cysteinyl-5'-AMP; it reads GSD. His253 is a Zn(2+) binding site. Position 280 (Val280) interacts with L-cysteinyl-5'-AMP. The 'KMSKS' region motif lies at 286–290; that stretch reads KMSKS.

It belongs to the class-I aminoacyl-tRNA synthetase family. MshC subfamily. As to quaternary structure, monomer. The cofactor is Zn(2+).

It catalyses the reaction 1D-myo-inositol 2-amino-2-deoxy-alpha-D-glucopyranoside + L-cysteine + ATP = 1D-myo-inositol 2-(L-cysteinylamino)-2-deoxy-alpha-D-glucopyranoside + AMP + diphosphate + H(+). Functionally, catalyzes the ATP-dependent condensation of GlcN-Ins and L-cysteine to form L-Cys-GlcN-Ins. In Streptomyces avermitilis (strain ATCC 31267 / DSM 46492 / JCM 5070 / NBRC 14893 / NCIMB 12804 / NRRL 8165 / MA-4680), this protein is L-cysteine:1D-myo-inositol 2-amino-2-deoxy-alpha-D-glucopyranoside ligase (mshC).